Here is a 307-residue protein sequence, read N- to C-terminus: Nitrogenase iron protein 2 (307 aa).

13–20 (GKGGIGKS) contributes to the ATP binding site. Residue cysteine 101 coordinates [4Fe-4S] cluster. The residue at position 104 (arginine 104) is an ADP-ribosylarginine; by dinitrogenase reductase ADP-ribosyltransferase. Cysteine 135 is a binding site for [4Fe-4S] cluster. Residues 285–307 (QLTETDKAAKESEKKQEDAEGEA) form a disordered region.

Belongs to the NifH/BchL/ChlL family. Homodimer. [4Fe-4S] cluster serves as cofactor. In terms of processing, the reversible ADP-ribosylation of Arg-104 inactivates the nitrogenase reductase and regulates nitrogenase activity.

The catalysed reaction is N2 + 8 reduced [2Fe-2S]-[ferredoxin] + 16 ATP + 16 H2O = H2 + 8 oxidized [2Fe-2S]-[ferredoxin] + 2 NH4(+) + 16 ADP + 16 phosphate + 6 H(+). The key enzymatic reactions in nitrogen fixation are catalyzed by the nitrogenase complex, which has 2 components: the iron protein and the molybdenum-iron protein. The chain is Nitrogenase iron protein 2 (nifH2) from Mastigocladus laminosus (Fischerella sp.).